Here is a 588-residue protein sequence, read N- to C-terminus: Nucleoporin ndc-1 (588 aa).

Residues 1-12 are compositionally biased toward polar residues; it reads MMGDSHSSFTTT. Residues 1–55 form a disordered region; sequence MMGDSHSSFTTTTDEHLYNQFSPGRRKNDFPAASSSSSSPNLRRSPNRTVSSPRV. At 1-79 the chain is on the cytoplasmic side; sequence MMGDSHSSFT…FQAEISVRKR (79 aa). The segment covering 31–48 has biased composition (low complexity); it reads PAASSSSSSPNLRRSPNR. The chain crosses the membrane as a helical span at residues 80–100; sequence LAGAACGYLSTIFFIVTVSIL. Residues 101 to 122 are Perinuclear space-facing; the sequence is KLTIWAPFSSVQDSLAWWIYPN. The helical transmembrane segment at 123 to 143 threads the bilayer; sequence AWASIIFVGIASVAMSLFSII. Over 144 to 159 the chain is Cytoplasmic; sequence KFCKVDQLPRLAATDT. The helical transmembrane segment at 160–180 threads the bilayer; sequence FALAGVALEFVTRLTFVYTAF. The Perinuclear space portion of the chain corresponds to 181-190; that stretch reads CVADFSFSRE. Residues 191–211 form a helical membrane-spanning segment; that stretch reads FAFVAISLAIAISSALVVFRS. The Cytoplasmic portion of the chain corresponds to 212 to 255; that stretch reads DYQLNFSHIQVNSVKTLIDFGTSLPYANISEICGIDAAISYTAA. A helical transmembrane segment spans residues 256 to 276; that stretch reads VALILVVGPMVSGFSAWWLLL. A topological domain (perinuclear space) is located at residue N277. The chain crosses the membrane as a helical span at residues 278–298; that stretch reads IPFHVVLFGLCFTQQFYSKIS. At 299–588 the chain is on the cytoplasmic side; sequence MKIVNQIVMK…IRMICLTDEL (290 aa).

The protein belongs to the NDC1 family.

The protein resides in the nucleus. It is found in the nuclear pore complex. Its subcellular location is the nucleus membrane. In terms of biological role, component of the nuclear pore complex (NPC), which plays a key role in de novo assembly and insertion of NPC in the nuclear envelope. Plays a role in postmitotic nuclear pore complex assembly potentially by promoting localization of nuclear pore complex proteins to the nuclear rim. This Caenorhabditis elegans protein is Nucleoporin ndc-1.